The primary structure comprises 568 residues: Acyl-CoA ligase gloD (568 aa).

ATP-binding positions include 211–219 (TSGTSGFLK), 352–357 (PGYGLT), D436, R455, and K553. Residues 282 to 352 (DMQIALKSVQ…QLCPEWEINP (71 aa)) are SBD1. Residues 353-415 (GYGLTESFVC…VRSPSVMKEY (63 aa)) are SBD2.

The protein belongs to the ATP-dependent AMP-binding enzyme family.

The protein operates within mycotoxin biosynthesis. In terms of biological role, acyl-CoA ligase; part of the gene cluster that mediates the biosynthesis of pneumocandins, lipohexapeptides of the echinocandin family that prevent fungal cell wall formation by non-competitive inhibition of beta-1,3-glucan synthase. The 10,12-dimethylmyristoyl side chain is synthesized by the reducing polyketide synthase gloL/GLPKS4. The thioesterase gloN/GLHYD exclusively interacts with gloL/GLPKS4 to maintain turnover of the polyketide side chain. The 10R,12S-dimethylmyristic acid is then transferred to the first thiolation domain of the nonribosomal peptide synthetase gloA/GLNRPS4 by the acyl-AMP ligase gloD/GLligase, followed by its acylation to L-ornithine to trigger elongation of the cyclic hexapeptide. L-ornithine, 4R-hydroxyl-L-proline (generated from L-proline by the dioxygenase gloF/GLOXY2), 3S-hydroxyl-L-homotyrosine (generated by gloG/GLHtyB, gloH/GLHtyA, gloI/GLHtyC, gloJ/GLHtyD and hydroxylated at C-3 by the dioxygenase gloM/GLOXY1), 3R-hydroxyl-L-glutamine (generated from L-glutamine probably by the dioxygenase gloE/GLOXY3) and 3S-hydroxyl-L-proline (generated from L-proline by the dioxygenase gloF/GLOXY2 to yield pneumocandin B0), or 3S-hydroxyl-4S-methyl-L-proline (generated from L-leucine by the dioxygenase gloC/GLOXY4 to yield pneumocandin A0) are sequentially added to the growing chain. The last C domain of gloA/GLNRPS4 is proposed to be responsible for cyclization by condensation to form the peptide bond between L-ornithine and 3S-hydroxyl-4S-methyl-L-proline (for pneumocandin A0) or 3S-hydroxyl-L-proline (for pneumocandin B0). Finally, the subsequent C-4 hydroxylation of 3S-hydroxyl-L-homotyrosine and L-ornithine dihydroxylation at C-4 and C-5 are performed by the cytochrome P450 monooxygenases gloP/GLP450-1 and gloO/GLP450-2, respectively. In Glarea lozoyensis (strain ATCC 20868 / MF5171), this protein is Acyl-CoA ligase gloD.